We begin with the raw amino-acid sequence, 464 residues long: CD-NTase-associated protein 4 (464 aa).

Residues 1-228 (MSASLLEKQS…FENFICHALE (228 aa)) form an N-terminal endonuclease domain region. Positions 229-464 (EDRTQWLSDP…EYMPTAELNI (236 aa)) are C-terminal SAVED domain.

This sequence belongs to the Cap4 nuclease family. In terms of assembly, a monomer in the absence of cAAA, in its presence it forms oligomers.

Its activity is regulated as follows. DNase activity is activated upon ligand binding. In terms of biological role, effector DNase of a CBASS antivirus system. CBASS (cyclic oligonucleotide-based antiphage signaling system) provides immunity against bacteriophage. The CD-NTase protein synthesizes cyclic nucleotides in response to infection; these serve as specific second messenger signals. The signals activate a diverse range of effectors, leading to bacterial cell death and thus abortive phage infection. A type II-C CBASS system. Probably in the presence of its endogenous cyclic nucleotide (synthesized by the cognate CD-NTase protein in the CBASS operon), or of 2',3',3'-cyclic AMP-AMP-AMP (cAAA) synthesized by Acinetobacter sp. ATCC 27244, endonucleolytically degrades dsDNA in a non-sequence specific manner. It is not activated by other cyclic nucleotides. The polypeptide is CD-NTase-associated protein 4 (Moraxella osloensis).